Reading from the N-terminus, the 92-residue chain is MASLVPCPNCGRRPKEEFTIKGAALSRPEADADSIDWFDYVYLRENPRGAYEEYWHHTSGCRRWLVVARDTVTHEIAACCDAAGRARSEARK.

The Zn(2+) site is built by Cys7, Cys10, His57, and Cys61.

This sequence belongs to the SoxD family. In terms of assembly, heterotetramer composed of subunits alpha (SoxA), beta (SoxB), gamma (SoxG) and delta (SoxD).

It localises to the cytoplasm. The catalysed reaction is sarcosine + (6S)-5,6,7,8-tetrahydrofolate + O2 = (6R)-5,10-methylene-5,6,7,8-tetrahydrofolate + glycine + H2O2. It catalyses the reaction sarcosine + O2 + H2O = formaldehyde + glycine + H2O2. Functionally, in the presence of tetrahydrofolate, catalyzes the oxidative demethylation of sarcosine to yield glycine, 5,10-methylenetetrahydrofolate and hydrogen peroxide. In the absence of tetrahydrofolate, catalyzes the oxidative demethylation of sarcosine to yield glycine, formaldehyde and hydrogen peroxide. This Rhizobium meliloti (strain 1021) (Ensifer meliloti) protein is Sarcosine oxidase subunit delta (soxD).